The following is a 227-amino-acid chain: 7-cyano-7-deazaguanine synthase (227 aa).

16 to 26 (FSGGQDSTTCL) lines the ATP pocket. Cys194, Cys202, Cys205, and Cys208 together coordinate Zn(2+).

This sequence belongs to the QueC family. The cofactor is Zn(2+).

The catalysed reaction is 7-carboxy-7-deazaguanine + NH4(+) + ATP = 7-cyano-7-deazaguanine + ADP + phosphate + H2O + H(+). It participates in purine metabolism; 7-cyano-7-deazaguanine biosynthesis. Its function is as follows. Catalyzes the ATP-dependent conversion of 7-carboxy-7-deazaguanine (CDG) to 7-cyano-7-deazaguanine (preQ(0)). The protein is 7-cyano-7-deazaguanine synthase of Haemophilus influenzae (strain 86-028NP).